Consider the following 222-residue polypeptide: Ribonuclease 3 (222 aa).

Residues 5–127 (PIKLEKKLKL…LIGAIYLDKG (123 aa)) form the RNase III domain. Residue Glu-41 coordinates Mg(2+). Asp-45 is a catalytic residue. 2 residues coordinate Mg(2+): Asp-113 and Glu-116. Residue Glu-116 is part of the active site. In terms of domain architecture, DRBM spans 152-221 (DAKTKLQEYS…ASLCLQDIFK (70 aa)).

The protein belongs to the ribonuclease III family. Homodimer. Mg(2+) is required as a cofactor.

Its subcellular location is the cytoplasm. It catalyses the reaction Endonucleolytic cleavage to 5'-phosphomonoester.. In terms of biological role, digests double-stranded RNA. Involved in the processing of primary rRNA transcript to yield the immediate precursors to the large and small rRNAs (23S and 16S). Processes some mRNAs, and tRNAs when they are encoded in the rRNA operon. Processes pre-crRNA and tracrRNA of type II CRISPR loci if present in the organism. This is Ribonuclease 3 from Pelagibacter ubique (strain HTCC1062).